The chain runs to 798 residues: Probable DEAD-box ATP-dependent RNA helicase 48 (798 aa).

3 disordered regions span residues 76 to 100, 117 to 148, and 236 to 257; these read KMWGNPDSGEKTAKSKQSHGPMSPK, DFWNENDGPVKKSDQGSRSGSDSIDSTSNSPI, and FRKNDSSTEEDSDEEGDEGKMI. A compositionally biased stretch (low complexity) spans 132 to 148; that stretch reads GSRSGSDSIDSTSNSPI. The span at 242–252 shows a compositional bias: acidic residues; sequence STEEDSDEEGD. The Q motif motif lies at 328–356; the sequence is KRFDESCISPLTLKALSASGILKMTRVQD. One can recognise a Helicase ATP-binding domain in the interval 359–543; sequence LSECLDGKDA…QLVLKRDHSY (185 aa). 372–379 contributes to the ATP binding site; sequence AKTGTGKS. The short motif at 491–494 is the DEAD box element; it reads DEAD. A Helicase C-terminal domain is found at 577-726; it reads LLKEHINNTP…SIVKHQVDQS (150 aa).

The protein belongs to the DEAD box helicase family.

The enzyme catalyses ATP + H2O = ADP + phosphate + H(+). The protein is Probable DEAD-box ATP-dependent RNA helicase 48 (RH48) of Arabidopsis thaliana (Mouse-ear cress).